The following is a 92-amino-acid chain: Small ribosomal subunit protein uS19 (92 aa).

This sequence belongs to the universal ribosomal protein uS19 family.

Protein S19 forms a complex with S13 that binds strongly to the 16S ribosomal RNA. This chain is Small ribosomal subunit protein uS19, found in Sodalis glossinidius (strain morsitans).